A 404-amino-acid polypeptide reads, in one-letter code: Tryptophan synthase beta chain (404 aa).

The residue at position 94 (lysine 94) is an N6-(pyridoxal phosphate)lysine.

The protein belongs to the TrpB family. Tetramer of two alpha and two beta chains. Requires pyridoxal 5'-phosphate as cofactor.

It carries out the reaction (1S,2R)-1-C-(indol-3-yl)glycerol 3-phosphate + L-serine = D-glyceraldehyde 3-phosphate + L-tryptophan + H2O. It functions in the pathway amino-acid biosynthesis; L-tryptophan biosynthesis; L-tryptophan from chorismate: step 5/5. Functionally, the beta subunit is responsible for the synthesis of L-tryptophan from indole and L-serine. This chain is Tryptophan synthase beta chain, found in Staphylococcus aureus (strain USA300).